The sequence spans 350 residues: Phosphate acyltransferase (350 aa).

Belongs to the PlsX family. Homodimer. Probably interacts with PlsY.

It localises to the cytoplasm. It catalyses the reaction a fatty acyl-[ACP] + phosphate = an acyl phosphate + holo-[ACP]. It participates in lipid metabolism; phospholipid metabolism. Catalyzes the reversible formation of acyl-phosphate (acyl-PO(4)) from acyl-[acyl-carrier-protein] (acyl-ACP). This enzyme utilizes acyl-ACP as fatty acyl donor, but not acyl-CoA. In Magnetococcus marinus (strain ATCC BAA-1437 / JCM 17883 / MC-1), this protein is Phosphate acyltransferase.